The sequence spans 624 residues: Probable potassium transport system protein Kup (624 aa).

The next 12 membrane-spanning stretches (helical) occupy residues 13-33 (LALG…LYTM), 52-72 (ILSL…VLVI), 102-122 (WIIM…SLIT), 139-159 (PALH…LFAI), 170-190 (LFGP…AIGI), 208-228 (FFMT…LAIT), 249-269 (WFGF…ALLL), 291-311 (MVAL…SGAF), 339-359 (IYIP…VLGF), 368-388 (AYGI…ALLM), 399-419 (TLVA…ANAV), and 421-441 (IPEG…ILVT).

The protein belongs to the HAK/KUP transporter (TC 2.A.72) family.

It is found in the cell inner membrane. The catalysed reaction is K(+)(in) + H(+)(in) = K(+)(out) + H(+)(out). Transport of potassium into the cell. Likely operates as a K(+):H(+) symporter. The chain is Probable potassium transport system protein Kup from Thiobacillus denitrificans (strain ATCC 25259 / T1).